A 358-amino-acid polypeptide reads, in one-letter code: Probable D-xylulose reductase A (358 aa).

Positions 47, 72, and 73 each coordinate Zn(2+). 182–187 (GAGPVG) provides a ligand contact to NAD(+).

It belongs to the zinc-containing alcohol dehydrogenase family. The cofactor is Zn(2+).

It carries out the reaction xylitol + NAD(+) = D-xylulose + NADH + H(+). The protein operates within carbohydrate degradation; L-arabinose degradation via L-arabinitol; D-xylulose 5-phosphate from L-arabinose (fungal route): step 4/5. In terms of biological role, xylitol dehydrogenase which catalyzes the conversion of xylitol to D-xylulose. Xylose is a major component of hemicelluloses such as xylan. Most fungi utilize D-xylose via three enzymatic reactions, xylose reductase (XR), xylitol dehydrogenase (XDH), and xylulokinase, to form xylulose 5-phosphate, which enters pentose phosphate pathway. The chain is Probable D-xylulose reductase A (xdhA) from Aspergillus clavatus (strain ATCC 1007 / CBS 513.65 / DSM 816 / NCTC 3887 / NRRL 1 / QM 1276 / 107).